Consider the following 297-residue polypeptide: tRNA(Ile)-lysidine synthase (297 aa).

Position 16–21 (16–21 (SGGSDS)) interacts with ATP.

The protein belongs to the tRNA(Ile)-lysidine synthase family.

It localises to the cytoplasm. It carries out the reaction cytidine(34) in tRNA(Ile2) + L-lysine + ATP = lysidine(34) in tRNA(Ile2) + AMP + diphosphate + H(+). Its function is as follows. Ligates lysine onto the cytidine present at position 34 of the AUA codon-specific tRNA(Ile) that contains the anticodon CAU, in an ATP-dependent manner. Cytidine is converted to lysidine, thus changing the amino acid specificity of the tRNA from methionine to isoleucine. The sequence is that of tRNA(Ile)-lysidine synthase from Mesomycoplasma hyopneumoniae (strain 232) (Mycoplasma hyopneumoniae).